Consider the following 436-residue polypeptide: GTPase Obg (436 aa).

Residues 2–160 (SMFLDTAKVS…RELALELKIL (159 aa)) form the Obg domain. One can recognise an OBG-type G domain in the interval 161–338 (ADVGLVGFPS…LLDATAQLLA (178 aa)). GTP-binding positions include 167-174 (GFPSVGKS), 192-196 (FTTIV), 214-217 (DLPG), 284-287 (NKMD), and 319-321 (SGI). 2 residues coordinate Mg(2+): S174 and T194. The region spanning 358 to 436 (GFEEEEKAFD…IGKFEFEFVD (79 aa)) is the OCT domain.

The protein belongs to the TRAFAC class OBG-HflX-like GTPase superfamily. OBG GTPase family. Monomer. Mg(2+) is required as a cofactor.

Its subcellular location is the cytoplasm. In terms of biological role, an essential GTPase which binds GTP, GDP and possibly (p)ppGpp with moderate affinity, with high nucleotide exchange rates and a fairly low GTP hydrolysis rate. Plays a role in control of the cell cycle, stress response, ribosome biogenesis and in those bacteria that undergo differentiation, in morphogenesis control. In Streptococcus mutans serotype c (strain ATCC 700610 / UA159), this protein is GTPase Obg.